The following is a 201-amino-acid chain: HTH-type transcriptional regulator Hpr (201 aa).

In terms of domain architecture, HTH marR-type spans 13–157; sequence AMLFSQRIAQ…MMCIIRNIYG (145 aa). A DNA-binding region (H-T-H motif) is located at residues 63–86; the sequence is ISEIAKFGVMHVSTAFNFSKKLEE.

Homodimer.

Functionally, negative regulator of protease production and sporulation. The chain is HTH-type transcriptional regulator Hpr from Geobacillus sp. (strain WCH70).